The following is a 183-amino-acid chain: Adenine phosphoribosyltransferase 3 (183 aa).

Belongs to the purine/pyrimidine phosphoribosyltransferase family. As to quaternary structure, homodimer.

The protein resides in the cytoplasm. The catalysed reaction is AMP + diphosphate = 5-phospho-alpha-D-ribose 1-diphosphate + adenine. It functions in the pathway purine metabolism; AMP biosynthesis via salvage pathway; AMP from adenine: step 1/1. Its function is as follows. Catalyzes a salvage reaction resulting in the formation of AMP, that is energically less costly than de novo synthesis. May contribute to the recycling of adenine into adenylate nucleotides and the inactivation of cytokinins by phosphoribosylation. Possesses low activity toward adenine and cytokinins. The protein is Adenine phosphoribosyltransferase 3 (APT3) of Arabidopsis thaliana (Mouse-ear cress).